The chain runs to 60 residues: Large ribosomal subunit protein bL32 (60 aa).

This sequence belongs to the bacterial ribosomal protein bL32 family.

In Petrotoga mobilis (strain DSM 10674 / SJ95), this protein is Large ribosomal subunit protein bL32.